We begin with the raw amino-acid sequence, 84 residues long: Small ribosomal subunit protein bS18 (84 aa).

The protein belongs to the bacterial ribosomal protein bS18 family. As to quaternary structure, part of the 30S ribosomal subunit. Forms a tight heterodimer with protein bS6.

Binds as a heterodimer with protein bS6 to the central domain of the 16S rRNA, where it helps stabilize the platform of the 30S subunit. The protein is Small ribosomal subunit protein bS18 of Mycobacterium sp. (strain JLS).